The following is a 321-amino-acid chain: Phospho-N-acetylmuramoyl-pentapeptide-transferase (321 aa).

The next 10 membrane-spanning stretches (helical) occupy residues 6–26 (IFIP…LFIG), 54–74 (MGGV…GLFF), 77–97 (FTPS…LGYL), 117–137 (LIGQ…EGFS), 143–163 (FGVA…FWLV), 175–195 (IDGL…IIAW), 200–220 (FDVV…FPYN), 226–246 (IFMG…ISII), 251–271 (WTLL…ILQV), and 301–321 (IDFV…WILF).

The protein belongs to the glycosyltransferase 4 family. MraY subfamily. Requires Mg(2+) as cofactor.

Its subcellular location is the cell membrane. The enzyme catalyses UDP-N-acetyl-alpha-D-muramoyl-L-alanyl-gamma-D-glutamyl-L-lysyl-D-alanyl-D-alanine + di-trans,octa-cis-undecaprenyl phosphate = Mur2Ac(oyl-L-Ala-gamma-D-Glu-L-Lys-D-Ala-D-Ala)-di-trans,octa-cis-undecaprenyl diphosphate + UMP. The protein operates within cell wall biogenesis; peptidoglycan biosynthesis. Functionally, catalyzes the initial step of the lipid cycle reactions in the biosynthesis of the cell wall peptidoglycan: transfers peptidoglycan precursor phospho-MurNAc-pentapeptide from UDP-MurNAc-pentapeptide onto the lipid carrier undecaprenyl phosphate, yielding undecaprenyl-pyrophosphoryl-MurNAc-pentapeptide, known as lipid I. This chain is Phospho-N-acetylmuramoyl-pentapeptide-transferase, found in Enterococcus faecalis (strain ATCC 700802 / V583).